The sequence spans 71 residues: Protein DP71L (71 aa).

2 important for host CHOP inhibition regions span residues 16–18 (VRF) and 57–61 (LSTVL).

The protein belongs to the asfivirus DP71L family. In terms of assembly, interacts (via C-terminus) with host PPP1CB.

Functionally, interacts with the host phosphatase PP1 catalytic subunit (PPP1CB) and recruits it to dephosphorylate EIF2S1/eIF2alpha and therefore restores the host translation that has been shut-down by the host. Also inhibits the EIF2S1/eIF2alpha-ATF4-DDIT3/CHOP pathway. The chain is Protein DP71L from African swine fever virus (strain Badajoz 1971 Vero-adapted) (Ba71V).